Here is a 97-residue protein sequence, read N- to C-terminus: YcgL domain-containing protein PST_1364 (97 aa).

Residues 3–87 (LICSIYKSPR…AEDEYIEHLP (85 aa)) enclose the YcgL domain.

The sequence is that of YcgL domain-containing protein PST_1364 from Stutzerimonas stutzeri (strain A1501) (Pseudomonas stutzeri).